The primary structure comprises 255 residues: NAD-dependent protein deacylase (255 aa).

Residues 1-253 (MIEEAPRIIA…VKVKRCLENK (253 aa)) enclose the Deacetylase sirtuin-type domain. 20-39 (GAGVSAESGIPTFRDRGGLW) is a binding site for NAD(+). The substrate site is built by Tyr64 and Arg67. 98–101 (QNID) contacts NAD(+). His116 functions as the Proton acceptor in the catalytic mechanism. Zn(2+)-binding residues include Cys124, Cys127, Cys151, and Cys154. Residues 191-193 (GTS), 217-219 (NTK), and Ala235 contribute to the NAD(+) site.

It belongs to the sirtuin family. Class III subfamily. Zn(2+) is required as a cofactor.

The protein resides in the cytoplasm. It catalyses the reaction N(6)-acetyl-L-lysyl-[protein] + NAD(+) + H2O = 2''-O-acetyl-ADP-D-ribose + nicotinamide + L-lysyl-[protein]. It carries out the reaction N(6)-succinyl-L-lysyl-[protein] + NAD(+) + H2O = 2''-O-succinyl-ADP-D-ribose + nicotinamide + L-lysyl-[protein]. In terms of biological role, NAD-dependent lysine deacetylase and desuccinylase that specifically removes acetyl and succinyl groups on target proteins. Modulates the activities of several proteins which are inactive in their acylated form. Deacetylates the N-terminal lysine residue of Alba, the major archaeal chromatin protein and that, in turn, increases Alba's DNA binding affinity, thereby repressing transcription. The protein is NAD-dependent protein deacylase of Thermococcus sibiricus (strain DSM 12597 / MM 739).